Consider the following 30-residue polypeptide: Cytochrome c oxidase subunit 5C (30 aa).

Residues 15–30 (VVKELVIXXXLGLXAG) traverse the membrane as a helical segment.

The protein belongs to the cytochrome c oxidase subunit 5C family.

The protein resides in the mitochondrion inner membrane. Functionally, this protein is one of the nuclear-coded polypeptide chains of cytochrome c oxidase, the terminal oxidase in mitochondrial electron transport. The protein is Cytochrome c oxidase subunit 5C (COX5C) of Solanum tuberosum (Potato).